We begin with the raw amino-acid sequence, 183 residues long: MDIDPYKEFGASVELLSFLPSDFFPSVRDLLDTASALYRDALESPEHCTPNHTALRQAILCWGELMTLASWVGNNLEDPAARDLVVNYVNTNMGLKIRQLLWFHISCLTFGRETVLEYLVSFGVWIRTPPAYRPPNAPILSTLPETTVVRRRGRSPRRRTPSPRRRRSQSPRRRRSQSPASQC.

Positions 136–183 are disordered; the sequence is NAPILSTLPETTVVRRRGRSPRRRTPSPRRRRSQSPRRRRSQSPASQC. Residues 149 to 176 show a composition bias toward basic residues; it reads VRRRGRSPRRRTPSPRRRRSQSPRRRRS. Phosphoserine; by host occurs at positions 155, 162, and 170. Residues 155–161 form a 1; half-length repeat; it reads SPRRRTP. Residues 155-177 form a 3 X 8 AA repeats of S-P-R-R-R-[PR]-S-Q region; sequence SPRRRTPSPRRRRSQSPRRRRSQ. The Bipartite nuclear localization signal motif lies at 158–175; the sequence is RRTPSPRRRRSQSPRRRR. 2 tandem repeats follow at residues 162 to 169 and 170 to 177. The interval 177 to 183 is RNA binding; it reads QSPASQC.

It belongs to the orthohepadnavirus core antigen family. Homodimerizes, then multimerizes. Interacts with cytosol exposed regions of viral L glycoprotein present in the reticulum-to-Golgi compartment. Interacts with human FLNB. Phosphorylated form interacts with host importin alpha; this interaction depends on the exposure of the NLS, which itself depends upon genome maturation and/or phosphorylation of the capsid protein. Interacts with host NUP153. Post-translationally, phosphorylated by host SRPK1, SRPK2, and maybe protein kinase C or GAPDH. Phosphorylation is critical for pregenomic RNA packaging. Protein kinase C phosphorylation is stimulated by HBx protein and may play a role in transport of the viral genome to the nucleus at the late step during the viral replication cycle.

It is found in the virion. The protein localises to the host cytoplasm. Its function is as follows. Self assembles to form an icosahedral capsid. Most capsids appear to be large particles with an icosahedral symmetry of T=4 and consist of 240 copies of capsid protein, though a fraction forms smaller T=3 particles consisting of 180 capsid proteins. Entering capsids are transported along microtubules to the nucleus. Phosphorylation of the capsid is thought to induce exposure of nuclear localization signal in the C-terminal portion of the capsid protein that allows binding to the nuclear pore complex via the importin (karyopherin-) alpha and beta. Capsids are imported in intact form through the nuclear pore into the nuclear basket, where it probably binds NUP153. Only capsids that contain the mature viral genome can release the viral DNA and capsid protein into the nucleoplasm. Immature capsids get stuck in the basket. Capsids encapsulate the pre-genomic RNA and the P protein. Pre-genomic RNA is reverse-transcribed into DNA while the capsid is still in the cytoplasm. The capsid can then either be directed to the nucleus, providing more genomes for transcription, or bud through the endoplasmic reticulum to provide new virions. This chain is Capsid protein, found in Hepatitis B virus genotype F2 (isolate Brazil/w4B) (HBV-F).